We begin with the raw amino-acid sequence, 227 residues long: Extracellular deoxyribonuclease (227 aa).

The signal sequence occupies residues M1 to A20.

This sequence belongs to the EndA/NucM nuclease family.

It localises to the secreted. In Aeromonas hydrophila, this protein is Extracellular deoxyribonuclease.